The chain runs to 391 residues: MAKLNAYFGEYGGQYVPQILVPALDQLEQAFIDAQEDPDFRAEFMSLLQEYAGRPTALTLTRNLTKGTKTKLYLKREDLLHGGAHKTNEVLGQGLVGKRMGKSAIIAETGAGQHGVGSALASALVGLKCRIIMGAKNLERQSPNVFRMKLMAESIPSSVTLKVAVNEALRDWSATETTHYYLGTAAGPHPYPTIVREFQRIIGEETKLQILAREGRLPDAVLACIGGGSNAIGMFADFIDEANVRLIGIEPAGKGIDTHQHGAPLKHGKTGIFFGMKAPLMQDSYGQVEESYSVSAGLDFPSVGPQHAHLNAIGRANYESITDDEALEAFQSIARNEGIIAALESSHALAYAIKMARIDPDKEQLLVVNLSGRGDKDIFTVHQLLEERGAL.

Position 86 is an N6-(pyridoxal phosphate)lysine (K86).

Belongs to the TrpB family. In terms of assembly, tetramer of two alpha and two beta chains. It depends on pyridoxal 5'-phosphate as a cofactor.

It carries out the reaction (1S,2R)-1-C-(indol-3-yl)glycerol 3-phosphate + L-serine = D-glyceraldehyde 3-phosphate + L-tryptophan + H2O. It functions in the pathway amino-acid biosynthesis; L-tryptophan biosynthesis; L-tryptophan from chorismate: step 5/5. Functionally, the beta subunit is responsible for the synthesis of L-tryptophan from indole and L-serine. The chain is Tryptophan synthase beta chain from Vibrio metschnikovii.